The sequence spans 95 residues: Integration host factor subunit beta (95 aa).

This sequence belongs to the bacterial histone-like protein family. In terms of assembly, heterodimer of an alpha and a beta chain.

This protein is one of the two subunits of integration host factor, a specific DNA-binding protein that functions in genetic recombination as well as in transcriptional and translational control. This Shewanella pealeana (strain ATCC 700345 / ANG-SQ1) protein is Integration host factor subunit beta.